The chain runs to 504 residues: MALPVLLLLLALPSRSVQDEELKLNECVCEGMSCGNGDRCQGQQCFASLSINDGAKVYQKGCFQVYEQGKMTCKTPPSPDQAVECCQGYLCNMNITAKLPSSKGQTLQGEAAGYSMETLIIVILAPVVVLVIFSVVAVLIIRRIQKNHMERLNSRDAEYGTIEGLIASNVGDSTLADLLDHSCTSGSGSGLPFLVQRTVARQITLVECVGKGRYGEVWRGQWQGENVAVKIFSSRDEKSWFRETELYNTVLLRHENILGFIASDMTSRNSSTQLWLITHYHEMGSLYDYLQLTTLDTVSCLRIVLSIASGLAHLHIEIFGTQGKPAISHRDLKSKNILVKKNGQCCIADLGLAVMHSQSTNQLDVGNNPRVGTKRYMAPEVLDETIQADCFDSYKRVDIWAFGLVLWEVARRMVSNGIVEDYKPPFYDLVPNDPSFEDMRKVVCVDQQRPNIPNRWFSDPTLTSLAKLMKECWYQNPSARLTALRIKKTLTKIDNSLDKLKADC.

The N-terminal stretch at 1–16 (MALPVLLLLLALPSRS) is a signal peptide. Topologically, residues 17–119 (VQDEELKLNE…EAAGYSMETL (103 aa)) are extracellular. Residue Asn-94 is glycosylated (N-linked (GlcNAc...) asparagine). Residues 120–140 (IIVILAPVVVLVIFSVVAVLI) traverse the membrane as a helical segment. The Cytoplasmic segment spans residues 141 to 504 (IRRIQKNHME…NSLDKLKADC (364 aa)). The GS domain maps to 173–202 (STLADLLDHSCTSGSGSGLPFLVQRTVARQ). The Protein kinase domain occupies 203-497 (ITLVECVGKG…KTLTKIDNSL (295 aa)). ATP contacts are provided by residues 209-217 (VGKGRYGEV) and Lys-230. Asp-331 functions as the Proton acceptor in the catalytic mechanism.

This sequence belongs to the protein kinase superfamily. TKL Ser/Thr protein kinase family. TGFB receptor subfamily. Requires Mg(2+) as cofactor. Mn(2+) is required as a cofactor.

It is found in the membrane. The catalysed reaction is L-threonyl-[receptor-protein] + ATP = O-phospho-L-threonyl-[receptor-protein] + ADP + H(+). It carries out the reaction L-seryl-[receptor-protein] + ATP = O-phospho-L-seryl-[receptor-protein] + ADP + H(+). In terms of biological role, on ligand binding, forms a receptor complex consisting of two type II and two type I transmembrane serine/threonine kinases. Type II receptors phosphorylate and activate type I receptors which autophosphorylate, then bind and activate SMAD transcriptional regulators. Receptor for activin. In Gallus gallus (Chicken), this protein is Activin receptor type-1 (ACVR1).